Consider the following 664-residue polypeptide: Glycine--tRNA ligase beta subunit (664 aa).

This sequence belongs to the class-II aminoacyl-tRNA synthetase family. As to quaternary structure, tetramer of two alpha and two beta subunits.

It is found in the cytoplasm. The enzyme catalyses tRNA(Gly) + glycine + ATP = glycyl-tRNA(Gly) + AMP + diphosphate. The protein is Glycine--tRNA ligase beta subunit of Rickettsia felis (strain ATCC VR-1525 / URRWXCal2) (Rickettsia azadi).